A 596-amino-acid polypeptide reads, in one-letter code: Sodium/mannose cotransporter SLC5A10 (596 aa).

The Extracellular segment spans residues 1 to 15 (MAANSTSDLHTPGTQ). N-linked (GlcNAc...) asparagine glycosylation is present at Asn-4. A helical membrane pass occupies residues 16–36 (LSVADIIVITVYFALNVAVGI). Over 37–72 (WSSCRASRNTVNGYFLAGRDMTWWPIGASLFASSEG) the chain is Cytoplasmic. A helical transmembrane segment spans residues 73–93 (SGLFIGLAGSGAAGGLAVAGF). The Extracellular segment spans residues 94 to 99 (EWNATY). N-linked (GlcNAc...) asparagine glycosylation is present at Asn-96. Residues 100-120 (VLLALAWVFVPIYISSEIVTL) traverse the membrane as a helical segment. At 121-149 (PEYIQKRYGGQRIRMYLSVLSLLLSVFTK) the chain is on the cytoplasmic side. A phosphoserine mark is found at Ser-141 and Ser-145. Thr-148 bears the Phosphothreonine mark. Residues 150–170 (ISLDLYAGALFVHICLGWNFY) traverse the membrane as a helical segment. Topologically, residues 171–173 (LST) are extracellular. Residues 174-194 (ILTLGITALYTIAGGLAAVIY) traverse the membrane as a helical segment. At 195-200 (TDALQT) the chain is on the cytoplasmic side. The chain crosses the membrane as a helical span at residues 201–221 (LIMVVGAVILTIKAFDQIGGY). The Extracellular segment spans residues 222–264 (GQLEAAYAQAIPSRTIANTTCHLPRTDAMHMFRDPHTGDLPWT). A helical transmembrane segment spans residues 265–285 (GMTFGLTIMATWYWCTDQVIV). Topologically, residues 286–300 (QRSLSARDLNHAKAG) are cytoplasmic. The chain crosses the membrane as a helical span at residues 301-321 (SILASYLKMLPMGLIIMPGMI). Topologically, residues 322–355 (SRALFPDDVGCVVPSECLRACGAEVGCSNIAYPK) are extracellular. The helical transmembrane segment at 356–376 (LVMELMPIGLRGLMIAVMLAA) threads the bilayer. The Cytoplasmic segment spans residues 377 to 409 (LMSSLTSIFNSSSTLFTMDIWRRLRPRSGEREL). A helical transmembrane segment spans residues 410–430 (LLVGRLVIVALIGVSVAWIPV). Over 431–443 (LQDSNSGQLFIYM) the chain is Extracellular. A helical transmembrane segment spans residues 444–464 (QSVTSSLAPPVTAVFVLGVFW). Residues 465-471 (RRANEQG) are Cytoplasmic-facing. The chain crosses the membrane as a helical span at residues 472–492 (AFWGLIAGLVVGATRLVLEFL). Residues 493–513 (NPAPPCGEPDTRPAVLGSIHY) are Extracellular-facing. Residues 514 to 534 (LHFAVALFALSGAVVVAGSLL) traverse the membrane as a helical segment. At 535 to 575 (TPPPQSVQIENLTWWTLAQDVPLGTKAGDGQTPQKHAFWAR) the chain is on the cytoplasmic side. A helical membrane pass occupies residues 576-596 (VCGFNAILLMCVNIFFYAYFA).

It belongs to the sodium:solute symporter (SSF) (TC 2.A.21) family. Predominantly expressed at high levels in kidney. Very low expression is detected in testes. As to expression, expressed in kidney. In terms of tissue distribution, the most abundant isoform expressed in kidney.

Its subcellular location is the apical cell membrane. The enzyme catalyses D-mannose(out) + Na(+)(out) = D-mannose(in) + Na(+)(in). It carries out the reaction D-fructopyranose(out) + Na(+)(out) = D-fructopyranose(in) + Na(+)(in). Inhibited by phlorizin. Electrogenic Na+-coupled sugar symporter that actively transports D-mannose or D-fructose at the plasma membrane, with a Na+ to sugar coupling ratio of 1:1. Transporter activity is driven by a transmembrane Na+ electrochemical gradient set by the Na+/K+ pump. Exclusively recognizes sugar substrates having a pyranose ring with an axial hydroxyl group on carbon 2. Has likely evolved to enable renal reabsorption of D-mannose, an important constituent of oligosaccharide chains of glycoproteins. Contributes to dietary D-fructose reabsorption from glomerular filtrate across the brush border of the kidney. In terms of biological role, appears to have no transporter activity. This is Sodium/mannose cotransporter SLC5A10 (SLC5A10) from Homo sapiens (Human).